The sequence spans 139 residues: Ribonuclease VapC36 (139 aa).

The PINc domain maps to 1 to 127 (MIVDTSAVVA…GNDFPQTDLE (127 aa)). The Mg(2+) site is built by Asp-4 and Asp-100.

It belongs to the PINc/VapC protein family. The cofactor is Mg(2+).

Its function is as follows. Toxic component of a type II toxin-antitoxin (TA) system. An RNase. Its cognate antitoxin is VapB36. In Mycobacterium tuberculosis (strain ATCC 25618 / H37Rv), this protein is Ribonuclease VapC36.